We begin with the raw amino-acid sequence, 258 residues long: Snake venom serine protease (258 aa).

The first 18 residues, 1–18, serve as a signal peptide directing secretion; it reads MVLIRVLANLLILQLSYA. Residues 19–24 constitute a propeptide that is removed on maturation; that stretch reads QKSSEL. Positions 25–249 constitute a Peptidase S1 domain; the sequence is VIGGDECNIN…YTEWIQSILA (225 aa). 6 cysteine pairs are disulfide-bonded: C31/C163, C50/C66, C98/C256, C142/C210, C174/C189, and C200/C225. Residues H65 and D110 each act as charge relay system in the active site. Residue N154 is glycosylated (N-linked (GlcNAc...) asparagine). Catalysis depends on S204, which acts as the Charge relay system.

Belongs to the peptidase S1 family. Snake venom subfamily. In terms of assembly, monomer. In terms of tissue distribution, expressed by the venom gland.

Its subcellular location is the secreted. Snake venom serine protease that may act in the hemostasis system of the prey. This Lachesis stenophrys (Central American bushmaster) protein is Snake venom serine protease.